We begin with the raw amino-acid sequence, 347 residues long: DNA-directed RNA polymerase subunit alpha (347 aa).

Positions M1–D243 are alpha N-terminal domain (alpha-NTD). The segment at F260–A347 is alpha C-terminal domain (alpha-CTD).

This sequence belongs to the RNA polymerase alpha chain family. As to quaternary structure, homodimer. The RNAP catalytic core consists of 2 alpha, 1 beta, 1 beta' and 1 omega subunit. When a sigma factor is associated with the core the holoenzyme is formed, which can initiate transcription.

The catalysed reaction is RNA(n) + a ribonucleoside 5'-triphosphate = RNA(n+1) + diphosphate. Functionally, DNA-dependent RNA polymerase catalyzes the transcription of DNA into RNA using the four ribonucleoside triphosphates as substrates. The chain is DNA-directed RNA polymerase subunit alpha from Nitratidesulfovibrio vulgaris (strain ATCC 29579 / DSM 644 / CCUG 34227 / NCIMB 8303 / VKM B-1760 / Hildenborough) (Desulfovibrio vulgaris).